The primary structure comprises 240 residues: Putative RING finger protein ORF96 (240 aa).

Residues 9 to 44 (CVVCMEEKPLVVFEPCMHHNCCESCSGHVSNCPYCR) form an RING-type 1 zinc finger. The RING-type 2; degenerate zinc-finger motif lies at 150-202 (CVICKKEIKEEVGKTYMHACCTATICKPCAKAILKAMVEKEITENLPFCPYCF).

The protein is Putative RING finger protein ORF96 of Ostreid herpesvirus 1 (isolate France) (OsHV-1).